An 89-amino-acid chain; its full sequence is MALAIEAKRQILTGNQRHKTDTGSPEVQIALLSTRITMLTEHFKTHKKDHGSRKGLLTLVAKRRRLLTYLRDTDPERYKAVLLKLGIRR.

This sequence belongs to the universal ribosomal protein uS15 family. In terms of assembly, part of the 30S ribosomal subunit. Forms a bridge to the 50S subunit in the 70S ribosome, contacting the 23S rRNA.

In terms of biological role, one of the primary rRNA binding proteins, it binds directly to 16S rRNA where it helps nucleate assembly of the platform of the 30S subunit by binding and bridging several RNA helices of the 16S rRNA. Functionally, forms an intersubunit bridge (bridge B4) with the 23S rRNA of the 50S subunit in the ribosome. The protein is Small ribosomal subunit protein uS15 of Solibacter usitatus (strain Ellin6076).